The chain runs to 189 residues: Phosphoheptose isomerase (189 aa).

The 156-residue stretch at 34-189 (AVETLKNGNK…CQIIDNELSH (156 aa)) folds into the SIS domain. 49-51 (NGG) serves as a coordination point for substrate. Residues H58 and E62 each contribute to the Zn(2+) site. Substrate is bound by residues E62, 91–92 (ND), 117–119 (STS), S122, and Q169. Residues Q169 and H177 each contribute to the Zn(2+) site.

Belongs to the SIS family. GmhA subfamily. In terms of assembly, homotetramer. Requires Zn(2+) as cofactor.

It is found in the cytoplasm. The catalysed reaction is 2 D-sedoheptulose 7-phosphate = D-glycero-alpha-D-manno-heptose 7-phosphate + D-glycero-beta-D-manno-heptose 7-phosphate. The protein operates within carbohydrate biosynthesis; D-glycero-D-manno-heptose 7-phosphate biosynthesis; D-glycero-alpha-D-manno-heptose 7-phosphate and D-glycero-beta-D-manno-heptose 7-phosphate from sedoheptulose 7-phosphate: step 1/1. Its function is as follows. Catalyzes the isomerization of sedoheptulose 7-phosphate in D-glycero-D-manno-heptose 7-phosphate. In Aliarcobacter butzleri (strain RM4018) (Arcobacter butzleri), this protein is Phosphoheptose isomerase.